The following is a 116-amino-acid chain: Large ribosomal subunit protein bL17 (116 aa).

It belongs to the bacterial ribosomal protein bL17 family. In terms of assembly, part of the 50S ribosomal subunit. Contacts protein L32.

The sequence is that of Large ribosomal subunit protein bL17 from Chloroflexus aggregans (strain MD-66 / DSM 9485).